The sequence spans 306 residues: Nucleotide-binding protein amb4396 (306 aa).

The segment covering 1–14 (MSDLHSSPTDQTSA) has biased composition (polar residues). The segment at 1 to 20 (MSDLHSSPTDQTSAPAHAGG) is disordered. Position 29–36 (29–36 (GMSGAGKT)) interacts with ATP. GTP is bound at residue 77 to 80 (DIRT).

It belongs to the RapZ-like family.

Its function is as follows. Displays ATPase and GTPase activities. This is Nucleotide-binding protein amb4396 from Paramagnetospirillum magneticum (strain ATCC 700264 / AMB-1) (Magnetospirillum magneticum).